The following is a 1234-amino-acid chain: DNA-directed RNA polymerase subunit beta (1234 aa).

The segment at 1169 to 1234 (ESVDEDADEL…LDLDDFGDEH (66 aa)) is disordered. Composition is skewed to acidic residues over residues 1171–1180 (VDEDADELEV) and 1191–1234 (EKEE…GDEH).

It belongs to the RNA polymerase beta chain family. The RNAP catalytic core consists of 2 alpha, 1 beta, 1 beta' and 1 omega subunit. When a sigma factor is associated with the core the holoenzyme is formed, which can initiate transcription.

The enzyme catalyses RNA(n) + a ribonucleoside 5'-triphosphate = RNA(n+1) + diphosphate. In terms of biological role, DNA-dependent RNA polymerase catalyzes the transcription of DNA into RNA using the four ribonucleoside triphosphates as substrates. The sequence is that of DNA-directed RNA polymerase subunit beta from Clostridium botulinum (strain Langeland / NCTC 10281 / Type F).